The primary structure comprises 384 residues: uncharacterized protein (384 aa).

It to S.pombe SpAC2E11.17.

This is an uncharacterized protein from Schizosaccharomyces pombe (strain 972 / ATCC 24843) (Fission yeast).